Here is a 308-residue protein sequence, read N- to C-terminus: Aspartate carbamoyltransferase catalytic subunit (308 aa).

The carbamoyl phosphate site is built by Arg57 and Thr58. Position 86 (Lys86) interacts with L-aspartate. 3 residues coordinate carbamoyl phosphate: Arg107, His135, and Gln138. 2 residues coordinate L-aspartate: Arg168 and Arg229. Residues Leu268 and Pro269 each contribute to the carbamoyl phosphate site.

The protein belongs to the aspartate/ornithine carbamoyltransferase superfamily. ATCase family. As to quaternary structure, heterooligomer of catalytic and regulatory chains.

It carries out the reaction carbamoyl phosphate + L-aspartate = N-carbamoyl-L-aspartate + phosphate + H(+). It participates in pyrimidine metabolism; UMP biosynthesis via de novo pathway; (S)-dihydroorotate from bicarbonate: step 2/3. Functionally, catalyzes the condensation of carbamoyl phosphate and aspartate to form carbamoyl aspartate and inorganic phosphate, the committed step in the de novo pyrimidine nucleotide biosynthesis pathway. The chain is Aspartate carbamoyltransferase catalytic subunit from Pyrococcus abyssi (strain GE5 / Orsay).